Consider the following 476-residue polypeptide: Alkaline phosphatase H (476 aa).

The signal sequence occupies residues 1-26; sequence MTPGYPLALSLAVSMAVLGSALPAQA. D77 is a Mg(2+) binding site. Zn(2+) is bound at residue D77. S128 functions as the Phosphoserine intermediate in the catalytic mechanism. Phosphoserine is present on S128. Residues D179 and T181 each coordinate Mg(2+). S206 carries the post-translational modification Phosphoserine. Q346 is a Mg(2+) binding site. 5 residues coordinate Zn(2+): D353, H357, D395, H396, and H438.

Belongs to the alkaline phosphatase family. Requires Mg(2+) as cofactor. Zn(2+) is required as a cofactor.

The protein resides in the secreted. It is found in the periplasm. The catalysed reaction is a phosphate monoester + H2O = an alcohol + phosphate. Its function is as follows. Has only phosphomonoesterase activity. This Pseudomonas aeruginosa (strain UCBPP-PA14) protein is Alkaline phosphatase H (phoA).